The following is a 162-amino-acid chain: Circumsporozoite protein-related antigen (162 aa).

Positions 1–16 (MKILSVFFLALFFIIF) are cleaved as a signal peptide. Disordered regions lie at residues 24–44 (KTNK…KGSG) and 109–162 (PFKI…GPEH). A compositionally biased stretch (low complexity) spans 114–130 (SSDPADNANPDADSESN). Positions 137–162 (PQVTAQDVTPEQPQGDDNNLVSGPEH) are enriched in polar residues.

This chain is Circumsporozoite protein-related antigen, found in Plasmodium falciparum.